The sequence spans 448 residues: JmjC domain-containing protein D (448 aa).

The JmjC domain maps to 305–448 (EQIPQLRNDI…SLSQSFSIFP (144 aa)).

This is JmjC domain-containing protein D (jcdD) from Dictyostelium discoideum (Social amoeba).